Reading from the N-terminus, the 493-residue chain is Aluminum-activated malate transporter 1 (493 aa).

5 helical membrane-spanning segments follow: residues 28 to 48 (VGLA…GPFT), 51 to 71 (FGIN…FSVG), 104 to 124 (TVEP…STFV), 133 to 153 (KFDY…LSGF), and 169 to 189 (VVIG…VWAG). Phosphoserine is present on residues S320 and S327. T385 carries the phosphothreonine modification. The segment covering 441-452 (DNDRSNNVDDSR) has biased composition (basic and acidic residues). The segment at 441–460 (DNDRSNNVDDSRGGSSQDSC) is disordered.

This sequence belongs to the aromatic acid exporter (TC 2.A.85) family. Phosphorylated. A reversible phosphorylation is required for activation. Expressed in roots, but not in shoots. Detected in the root apex in absence of aluminum stress and in root apices, the stele and endodermis of the elongating zone of primary and lateral roots after aluminum stress. Not expressed in cortical and epidermal cells.

The protein resides in the cell membrane. Its activity is regulated as follows. Activated by external aluminum. Malate transporter critical for aluminum tolerance. The STOP1 transcription factor is required for ALMT1 expression. The chain is Aluminum-activated malate transporter 1 (ALMT1) from Arabidopsis thaliana (Mouse-ear cress).